Here is a 420-residue protein sequence, read N- to C-terminus: Phospholipase A1-II 3 (420 aa).

A signal peptide spans Met1–Ala21. An N-linked (GlcNAc...) asparagine glycan is attached at Asn231. The active-site Acyl-ester intermediate is the Ser240. Ser240 acts as the Charge relay system in catalysis. N-linked (GlcNAc...) asparagine glycosylation is present at Asn294. Residues Asp305 and His343 each act as charge relay system in the active site. A coiled-coil region spans residues Val367 to Val388. A glycan (N-linked (GlcNAc...) asparagine) is linked at Asn403.

The protein belongs to the AB hydrolase superfamily. Lipase family.

The protein resides in the secreted. Its function is as follows. Acylhydrolase that catalyzes the hydrolysis of phospholipids at the sn-1 position. This Oryza sativa subsp. indica (Rice) protein is Phospholipase A1-II 3.